A 755-amino-acid chain; its full sequence is Kojibiose phosphorylase (755 aa).

Residue 333 to 334 participates in substrate binding; the sequence is WD. E473 (proton donor) is an active-site residue. 573–574 contributes to the substrate binding site; it reads KQ.

This sequence belongs to the glycosyl hydrolase 65 family.

The enzyme catalyses kojibiose + phosphate = beta-D-glucose 1-phosphate + D-glucose. In terms of biological role, in vitro catalyzes the phosphorolysis of D-kojibiose into beta-D-glucose 1-phosphate and D-glucose. No other disaccharides tested substitute for D-kojibiose. In the reverse direction disaccharides can be formed from beta-D-glucose 1-phosphate plus D-glucose, L-sorbose, D-sorbitol, L-iditol or 1,5-anhydro-D-glucitol, but with low efficiency. The beta-D-glucose 1-phosphate product is the substrate for YcjU (AC P77366), the next apparent enzyme in the putative biochemical pathway encoded in this locus (yjcM to ycjW). The polypeptide is Kojibiose phosphorylase (ycjT) (Escherichia coli (strain K12)).